The chain runs to 144 residues: MRLNSLSPAEGAKHSAKRLGRGISSGLGKTGGRGHKGQKSRTGGGVRRGFEGGQMPLYRRLPKFGFTSLKSFHVAEIRLNDLAKVDGNEVTLESLKAANVITKDILSVKVILAGKIEKAVVVKGLGVTKGAKAAIEAAGGSIEE.

The disordered stretch occupies residues 1–52 (MRLNSLSPAEGAKHSAKRLGRGISSGLGKTGGRGHKGQKSRTGGGVRRGFEG).

This sequence belongs to the universal ribosomal protein uL15 family. Part of the 50S ribosomal subunit.

Its function is as follows. Binds to the 23S rRNA. The polypeptide is Large ribosomal subunit protein uL15 (Actinobacillus pleuropneumoniae serotype 7 (strain AP76)).